Consider the following 95-residue polypeptide: Aspartyl/glutamyl-tRNA(Asn/Gln) amidotransferase subunit C (95 aa).

The protein belongs to the GatC family. Heterotrimer of A, B and C subunits.

It catalyses the reaction L-glutamyl-tRNA(Gln) + L-glutamine + ATP + H2O = L-glutaminyl-tRNA(Gln) + L-glutamate + ADP + phosphate + H(+). It carries out the reaction L-aspartyl-tRNA(Asn) + L-glutamine + ATP + H2O = L-asparaginyl-tRNA(Asn) + L-glutamate + ADP + phosphate + 2 H(+). In terms of biological role, allows the formation of correctly charged Asn-tRNA(Asn) or Gln-tRNA(Gln) through the transamidation of misacylated Asp-tRNA(Asn) or Glu-tRNA(Gln) in organisms which lack either or both of asparaginyl-tRNA or glutaminyl-tRNA synthetases. The reaction takes place in the presence of glutamine and ATP through an activated phospho-Asp-tRNA(Asn) or phospho-Glu-tRNA(Gln). The chain is Aspartyl/glutamyl-tRNA(Asn/Gln) amidotransferase subunit C from Nitrosococcus oceani (strain ATCC 19707 / BCRC 17464 / JCM 30415 / NCIMB 11848 / C-107).